Reading from the N-terminus, the 210-residue chain is Placenta-expressed transcript 1 protein (210 aa).

The N-terminal stretch at 1–26 (MAVLGSPLLPLRLFLCFGLLFFSASC) is a signal peptide. Over 27–189 (TDHPDQCMIF…THKNSANRVF (163 aa)) the chain is Extracellular. N-linked (GlcNAc...) asparagine glycosylation is found at Asn-67 and Asn-94. The helical transmembrane segment at 190–209 (RSPVRDAIQILLAFLTSKLL) threads the bilayer. Residue Phe-210 is a topological domain, cytoplasmic.

Highly expressed in placenta.

The protein resides in the membrane. It is found in the apical cell membrane. Functionally, modulates leading keratinocyte migration and cellular adhesion to matrix proteins during a wound-healing response and promotes wound repair. May play a role during trichilemmal differentiation of the hair follicle. The chain is Placenta-expressed transcript 1 protein (PLET1) from Sus scrofa (Pig).